The chain runs to 383 residues: Putative F-box protein At1g77650 (383 aa).

The region spanning 1–47 (MAFLSLPSDVVEEFLFKTPIESLVLCKPTCKQLYALCNDKRFIYNHL) is the F-box domain.

This chain is Putative F-box protein At1g77650, found in Arabidopsis thaliana (Mouse-ear cress).